The primary structure comprises 483 residues: Protein disulfide-isomerase 5-3 (483 aa).

N-linked (GlcNAc...) asparagine glycosylation is found at N53, N74, and N99. Residues 133–263 (EETKEEFPDG…IVKMVEGLVA (131 aa)) enclose the Thioredoxin domain. C170 (nucleophile) is an active-site residue. N-linked (GlcNAc...) asparagine glycans are attached at residues N279, N326, and N376. A helical membrane pass occupies residues 442–462 (FSHFITNLCAIIGGVFTVAGI).

The protein belongs to the protein disulfide isomerase family. As to expression, widely expressed.

The protein localises to the membrane. Functionally, acts as a protein-folding catalyst that interacts with nascent polypeptides to catalyze the formation, isomerization, and reduction or oxidation of disulfide bonds. The protein is Protein disulfide-isomerase 5-3 (PDIL5-3) of Arabidopsis thaliana (Mouse-ear cress).